Reading from the N-terminus, the 504-residue chain is AMP phosphorylase (504 aa).

AMP is bound by residues glycine 169, 195–200 (SRAITS), and threonine 204. Residue aspartate 257 is the Proton donor of the active site. Residues serine 265 and lysine 289 each contribute to the AMP site.

It belongs to the thymidine/pyrimidine-nucleoside phosphorylase family. Type 2 subfamily.

The enzyme catalyses AMP + phosphate = alpha-D-ribose 1,5-bisphosphate + adenine. It carries out the reaction CMP + phosphate = cytosine + alpha-D-ribose 1,5-bisphosphate. The catalysed reaction is UMP + phosphate = alpha-D-ribose 1,5-bisphosphate + uracil. In terms of biological role, catalyzes the conversion of AMP and phosphate to adenine and ribose 1,5-bisphosphate (R15P). Exhibits phosphorylase activity toward CMP and UMP in addition to AMP. Functions in an archaeal AMP degradation pathway, together with R15P isomerase and RubisCO. In Methanococcus aeolicus (strain ATCC BAA-1280 / DSM 17508 / OCM 812 / Nankai-3), this protein is AMP phosphorylase.